The chain runs to 286 residues: 33 kDa chaperonin (286 aa).

Intrachain disulfides connect Cys225–Cys227 and Cys258–Cys261.

It belongs to the HSP33 family. In terms of processing, under oxidizing conditions two disulfide bonds are formed involving the reactive cysteines. Under reducing conditions zinc is bound to the reactive cysteines and the protein is inactive.

It localises to the cytoplasm. Redox regulated molecular chaperone. Protects both thermally unfolding and oxidatively damaged proteins from irreversible aggregation. Plays an important role in the bacterial defense system toward oxidative stress. This is 33 kDa chaperonin from Shewanella frigidimarina (strain NCIMB 400).